Consider the following 737-residue polypeptide: Protein OPG064 (737 aa).

Met1 bears the N-acetylmethionine; by host mark. Residues Cys496 and Cys535 are joined by a disulfide bond.

The protein belongs to the orthopoxvirus OPG064 family. As to quaternary structure, interacts with host KLC2; this interaction promotes IEV trafficking by engaging the host kinesin-1 complex. Interacts with protein OPG056. Post-translationally, N-acetylated on initiator methionine by host.

Functionally, plays a role in intracellular enveloped virus (IEV) transport to the cell surface on microtubules. Together with protein OPG056, forms a complex that interacts with host KLC2 (kinesin light chain isoform 2) to engage the kinesin-1 complex and thereby promote IEV trafficking. This Homo sapiens (Human) protein is Protein OPG064 (OPG064).